The sequence spans 922 residues: Protein translocase subunit SecA (922 aa).

Residues glutamine 87, 105–109 (GEGKT), and aspartate 519 contribute to the ATP site. Residues 850–891 (HASRQMRSIQGNAQHNSMGSFSGSGHGMGPTALSARSRPENA) are disordered. Over residues 854–865 (QMRSIQGNAQHN) the composition is skewed to polar residues. Zn(2+)-binding residues include cysteine 906, cysteine 908, cysteine 917, and cysteine 918.

Belongs to the SecA family. As to quaternary structure, monomer and homodimer. Part of the essential Sec protein translocation apparatus which comprises SecA, SecYEG and auxiliary proteins SecDF. Other proteins may also be involved. Zn(2+) is required as a cofactor.

It localises to the cell inner membrane. The protein resides in the cytoplasm. The catalysed reaction is ATP + H2O + cellular proteinSide 1 = ADP + phosphate + cellular proteinSide 2.. Part of the Sec protein translocase complex. Interacts with the SecYEG preprotein conducting channel. Has a central role in coupling the hydrolysis of ATP to the transfer of proteins into and across the cell membrane, serving as an ATP-driven molecular motor driving the stepwise translocation of polypeptide chains across the membrane. This is Protein translocase subunit SecA from Treponema denticola (strain ATCC 35405 / DSM 14222 / CIP 103919 / JCM 8153 / KCTC 15104).